A 220-amino-acid chain; its full sequence is Adenylate kinase (220 aa).

10–15 (GAGKGT) contributes to the ATP binding site. The interval 30-59 (STGDLFRANISQQTELGKLAKSYMDEGNLV) is NMP. AMP contacts are provided by residues Thr31, Arg36, 57–59 (NLV), 85–88 (GFPR), and Gln92. Residues 126 to 164 (GRRICRNDSAHVFHVSYKPPKQEGVCDVCGGELYQRDDD) form an LID region. Residues Arg127 and 137-138 (VF) contribute to the ATP site. Residues Arg161 and Arg172 each contribute to the AMP site. Gly200 is a binding site for ATP.

The protein belongs to the adenylate kinase family. In terms of assembly, monomer.

The protein resides in the cytoplasm. The catalysed reaction is AMP + ATP = 2 ADP. Its pathway is purine metabolism; AMP biosynthesis via salvage pathway; AMP from ADP: step 1/1. Catalyzes the reversible transfer of the terminal phosphate group between ATP and AMP. Plays an important role in cellular energy homeostasis and in adenine nucleotide metabolism. The sequence is that of Adenylate kinase from Streptomyces avermitilis (strain ATCC 31267 / DSM 46492 / JCM 5070 / NBRC 14893 / NCIMB 12804 / NRRL 8165 / MA-4680).